Consider the following 425-residue polypeptide: uncharacterized protein (425 aa).

This is an uncharacterized protein from Acidianus sp. F28 (AFV-2).